Reading from the N-terminus, the 2272-residue chain is COPII coat assembly protein SEC16 (2272 aa).

Residues 1–20 are compositionally biased toward basic residues; it reads MSTEAKRRRNQKKKQKQKQK. 11 disordered regions span residues 1–99, 124–401, 430–630, 646–714, 727–785, 832–852, 1488–1624, 1694–1737, 1750–1990, 2043–2125, and 2146–2187; these read MSTE…SPYV, AVDV…HTPE, VSSQ…HNLS, QQFL…EKKK, SKPK…NPYQ, EGAA…LGAY, LNHG…PKRA, QDRR…YRKT, SLAP…EHAV, RASS…KPIK, and KDAT…VGGP. Over residues 151 to 170 the composition is skewed to low complexity; that stretch reads ATPAEPSAAPVAPEAAASEE. 2 stretches are compositionally biased toward basic and acidic residues: residues 215 to 237 and 318 to 339; these read PEQR…ERTQ and EENR…RDQD. A compositionally biased stretch (polar residues) spans 481 to 496; sequence AQNTNPNVDTSQQLPV. The span at 497–509 shows a compositional bias: low complexity; the sequence is SRSSAELSSSQAA. Over residues 559-598 the composition is skewed to acidic residues; that stretch reads DNDDDLLNDDEEEEANAGDQPENDQENCDDDSFLDSDEEP. Residues 608–621 are compositionally biased toward polar residues; that stretch reads TTYTPSTQVLGQDR. Residues 703-714 show a composition bias toward basic and acidic residues; sequence ESVRRLEEEKKK. Residues 748-758 show a composition bias toward polar residues; that stretch reads QPASRSFSPSD. Composition is skewed to polar residues over residues 1526–1554, 1582–1609, and 1699–1719; these read PGSN…NLHG, PQNS…SIPS, and SAYS…SNIS. Residues 1750–1761 are compositionally biased toward low complexity; sequence SLAPSSVSLSQS. Over residues 1798–1815 the composition is skewed to polar residues; the sequence is SVDTSEYSFPDESVQSWE. The span at 1972 to 1990 shows a compositional bias: basic and acidic residues; the sequence is EEGRTDNQTKAVEKQEHAV. A compositionally biased stretch (acidic residues) spans 2061 to 2076; that stretch reads YYDDVVEDESDDSEEE. Basic and acidic residues-rich tracts occupy residues 2077 to 2103, 2114 to 2123, and 2146 to 2155; these read SERK…RKNE, LKKDTNEKKP, and KDATEEEKQK.

The protein belongs to the SEC16 family.

It is found in the endoplasmic reticulum membrane. Its function is as follows. Involved in the initiation of assembly of the COPII coat required for the formation of transport vesicles from the endoplasmic reticulum (ER) and the selection of cargo molecules. Also involved in autophagy. This chain is COPII coat assembly protein SEC16 (SEC16), found in Eremothecium gossypii (strain ATCC 10895 / CBS 109.51 / FGSC 9923 / NRRL Y-1056) (Yeast).